Consider the following 288-residue polypeptide: Adenylate kinase (288 aa).

65 to 70 (GVGKGT) contacts ATP. Residues 85-114 (ATGDLVRDELKSSGPLSKQLAEIVNQGKLV) form an NMP region. Residues Thr-86, Arg-91, 112–114 (KLV), 142–145 (GFPR), and Gln-149 contribute to the AMP site. The interval 178–226 (GRRICSECGKNFNVASIDVAGENGAPRISMARLNPPFTVCFKLITRADD) is LID. Position 179 (Arg-179) interacts with ATP. AMP contacts are provided by Arg-223 and Arg-234. Residue Gly-262 coordinates ATP.

This sequence belongs to the adenylate kinase family. Monomer.

It localises to the cytoplasm. It carries out the reaction AMP + ATP = 2 ADP. Functionally, catalyzes the reversible transfer of the terminal phosphate group between ATP and AMP. Plays an important role in cellular energy homeostasis and in adenine nucleotide metabolism. The chain is Adenylate kinase (ADK) from Solanum tuberosum (Potato).